A 399-amino-acid chain; its full sequence is tRNA-specific 2-thiouridylase MnmA (399 aa).

ATP contacts are provided by residues 21 to 28 (AMSGGVDS) and Leu-47. The active-site Nucleophile is Cys-115. Cys-115 and Cys-211 are joined by a disulfide. Gly-139 contributes to the ATP binding site. Positions 161-163 (RDQ) are interaction with tRNA. The active-site Cysteine persulfide intermediate is Cys-211.

It belongs to the MnmA/TRMU family.

Its subcellular location is the cytoplasm. The enzyme catalyses S-sulfanyl-L-cysteinyl-[protein] + uridine(34) in tRNA + AH2 + ATP = 2-thiouridine(34) in tRNA + L-cysteinyl-[protein] + A + AMP + diphosphate + H(+). Functionally, catalyzes the 2-thiolation of uridine at the wobble position (U34) of tRNA, leading to the formation of s(2)U34. This Parvibaculum lavamentivorans (strain DS-1 / DSM 13023 / NCIMB 13966) protein is tRNA-specific 2-thiouridylase MnmA.